The sequence spans 339 residues: ADP-L-glycero-D-manno-heptose-6-epimerase (339 aa).

NADP(+)-binding positions include phenylalanine 11–isoleucine 12, aspartate 32–aspartate 33, lysine 39, lysine 54, glutamate 75–serine 79, and asparagine 92. The Proton acceptor role is filled by tyrosine 139. NADP(+) is bound at residue lysine 143. Position 170 (asparagine 170) interacts with substrate. NADP(+)-binding residues include valine 171 and lysine 179. Lysine 179 functions as the Proton acceptor in the catalytic mechanism. Residues arginine 181, histidine 188, phenylalanine 202–tyrosine 205, arginine 215, and tyrosine 294 each bind substrate.

This sequence belongs to the NAD(P)-dependent epimerase/dehydratase family. HldD subfamily. As to quaternary structure, homopentamer. Requires NADP(+) as cofactor.

The enzyme catalyses ADP-D-glycero-beta-D-manno-heptose = ADP-L-glycero-beta-D-manno-heptose. It functions in the pathway nucleotide-sugar biosynthesis; ADP-L-glycero-beta-D-manno-heptose biosynthesis; ADP-L-glycero-beta-D-manno-heptose from D-glycero-beta-D-manno-heptose 7-phosphate: step 4/4. Functionally, catalyzes the interconversion between ADP-D-glycero-beta-D-manno-heptose and ADP-L-glycero-beta-D-manno-heptose via an epimerization at carbon 6 of the heptose. The protein is ADP-L-glycero-D-manno-heptose-6-epimerase of Polynucleobacter necessarius subsp. necessarius (strain STIR1).